The chain runs to 101 residues: MAKQSMKARDVKRAKIASKYAEKRNALKTVINDPKASDEERWEAVLKLQQLPRDASPTRQRNRCRITGRPHGFLRKFGMSRIKVREMAMRGEIPGLKKASW.

This sequence belongs to the universal ribosomal protein uS14 family. In terms of assembly, part of the 30S ribosomal subunit. Contacts proteins S3 and S10.

Binds 16S rRNA, required for the assembly of 30S particles and may also be responsible for determining the conformation of the 16S rRNA at the A site. The protein is Small ribosomal subunit protein uS14 of Idiomarina loihiensis (strain ATCC BAA-735 / DSM 15497 / L2-TR).